A 340-amino-acid chain; its full sequence is S-adenosylmethionine:tRNA ribosyltransferase-isomerase (340 aa).

It belongs to the QueA family. As to quaternary structure, monomer.

The protein resides in the cytoplasm. The catalysed reaction is 7-aminomethyl-7-carbaguanosine(34) in tRNA + S-adenosyl-L-methionine = epoxyqueuosine(34) in tRNA + adenine + L-methionine + 2 H(+). It participates in tRNA modification; tRNA-queuosine biosynthesis. Transfers and isomerizes the ribose moiety from AdoMet to the 7-aminomethyl group of 7-deazaguanine (preQ1-tRNA) to give epoxyqueuosine (oQ-tRNA). The protein is S-adenosylmethionine:tRNA ribosyltransferase-isomerase of Chromobacterium violaceum (strain ATCC 12472 / DSM 30191 / JCM 1249 / CCUG 213 / NBRC 12614 / NCIMB 9131 / NCTC 9757 / MK).